Here is a 475-residue protein sequence, read N- to C-terminus: Cytosolic non-specific dipeptidase (475 aa).

Ser58 is modified (phosphoserine). His99 serves as a coordination point for Mn(2+). Asp101 is an active-site residue. Asp132 lines the Mn(2+) pocket. Glu166 acts as the Proton acceptor in catalysis. Substrate is bound by residues 166-167, Asp195, and His228; that span reads EE. Positions 167 and 195 each coordinate Mn(2+). Ser299 carries the phosphoserine modification. The substrate site is built by Thr330, Arg343, Ser417, and His445. His445 contacts Mn(2+).

It belongs to the peptidase M20A family. In terms of assembly, homodimer. Mn(2+) is required as a cofactor. In terms of tissue distribution, highly expressed in the parafascicular nucleus of the thalamus, tuberomammillary nucleus of the hypothalamus and the mitral cell layer of the olfactory bulb.

The protein localises to the cytoplasm. The enzyme catalyses Hydrolysis of dipeptides, preferentially hydrophobic dipeptides including prolyl amino acids.. The catalysed reaction is L-threonyl-L-threonine + H2O = 2 L-threonine. It catalyses the reaction L-threonyl-L-serine + H2O = L-threonine + L-serine. It carries out the reaction L-seryl-L-threonine + H2O = L-threonine + L-serine. The enzyme catalyses L-cysteinylglycine + H2O = L-cysteine + glycine. The catalysed reaction is L-alanyl-L-cysteine + H2O = L-cysteine + L-alanine. It catalyses the reaction (S)-lactate + L-phenylalanine = N-[(S)-lactoyl]-L-phenylalanine + H2O. Inhibited by bestatin. Functionally, catalyzes the peptide bond hydrolysis in dipeptides, displaying a non-redundant activity toward threonyl dipeptides. Mediates threonyl dipeptide catabolism in a tissue-specific way. Has high dipeptidase activity toward cysteinylglycine, an intermediate metabolite in glutathione metabolism. Metabolizes N-lactoyl-amino acids, both through hydrolysis to form lactic acid and amino acids, as well as through their formation by reverse proteolysis. Plays a role in the regulation of cell cycle arrest and apoptosis. In Mus musculus (Mouse), this protein is Cytosolic non-specific dipeptidase (Cndp2).